A 273-amino-acid chain; its full sequence is 4-hydroxy-tetrahydrodipicolinate reductase (273 aa).

Residues 12–17 and Glu38 each bind NAD(+); that span reads GAGGRM. Residue Arg39 coordinates NADP(+). NAD(+)-binding positions include 102–104 and 126–129; these read GTT and AANF. Residue His159 is the Proton donor/acceptor of the active site. His160 is a (S)-2,3,4,5-tetrahydrodipicolinate binding site. Lys163 (proton donor) is an active-site residue. (S)-2,3,4,5-tetrahydrodipicolinate is bound at residue 169–170; that stretch reads GT.

The protein belongs to the DapB family. Homotetramer.

The protein localises to the cytoplasm. The enzyme catalyses (S)-2,3,4,5-tetrahydrodipicolinate + NAD(+) + H2O = (2S,4S)-4-hydroxy-2,3,4,5-tetrahydrodipicolinate + NADH + H(+). It carries out the reaction (S)-2,3,4,5-tetrahydrodipicolinate + NADP(+) + H2O = (2S,4S)-4-hydroxy-2,3,4,5-tetrahydrodipicolinate + NADPH + H(+). The protein operates within amino-acid biosynthesis; L-lysine biosynthesis via DAP pathway; (S)-tetrahydrodipicolinate from L-aspartate: step 4/4. Its function is as follows. Catalyzes the conversion of 4-hydroxy-tetrahydrodipicolinate (HTPA) to tetrahydrodipicolinate. The protein is 4-hydroxy-tetrahydrodipicolinate reductase of Salmonella schwarzengrund (strain CVM19633).